Here is a 300-residue protein sequence, read N- to C-terminus: Protoheme IX farnesyltransferase (300 aa).

The next 9 helical transmembrane spans lie at 31-51 (VMSL…NSLH), 52-72 (PFIS…AGAI), 92-112 (IVRG…MAFF), 123-145 (FLSA…MWLK), 152-172 (IVIG…SVSG), 179-199 (VILF…LALF), 225-245 (ILIY…VGMS), 247-267 (IIYL…SISL), and 280-300 (FFAY…FCRV).

Belongs to the UbiA prenyltransferase family. Protoheme IX farnesyltransferase subfamily.

It is found in the cell inner membrane. It carries out the reaction heme b + (2E,6E)-farnesyl diphosphate + H2O = Fe(II)-heme o + diphosphate. It functions in the pathway porphyrin-containing compound metabolism; heme O biosynthesis; heme O from protoheme: step 1/1. In terms of biological role, converts heme B (protoheme IX) to heme O by substitution of the vinyl group on carbon 2 of heme B porphyrin ring with a hydroxyethyl farnesyl side group. The chain is Protoheme IX farnesyltransferase from Rickettsia bellii (strain OSU 85-389).